We begin with the raw amino-acid sequence, 302 residues long: MSSAAHLSPKPFGRLLTAMVTPFDSDGKVDYAIAGRLARYLVDEGSDGIVVCGTTGESPTLSWSEQHQLLETVKSSVGKAVKVLAGTGSNSTAEAIEATVKAAELGADGALVVVPYYNKPPQEGLEIHFRSIANAAPDLPLMLYNIPGRTGSSIHPATVKRLMNCPNIISYKAASGTTSEVTDLRMQCGSQLAVYSGDDGLLLPMMSVGAVGVVSVASHIVGSRIKAMIDAYSTGQVNIALAYHEQLQPLFRALFATTNPIPVKAALEAIGWQVGSPRRPLSPLKKQMKEDLIDIIKSLRQI.

Pyruvate is bound at residue Thr-55. Tyr-144 serves as the catalytic Proton donor/acceptor. Residue Lys-172 is the Schiff-base intermediate with substrate of the active site. Val-214 is a pyruvate binding site.

It belongs to the DapA family. In terms of assembly, homotetramer; dimer of dimers.

It is found in the cytoplasm. The catalysed reaction is L-aspartate 4-semialdehyde + pyruvate = (2S,4S)-4-hydroxy-2,3,4,5-tetrahydrodipicolinate + H2O + H(+). It functions in the pathway amino-acid biosynthesis; L-lysine biosynthesis via DAP pathway; (S)-tetrahydrodipicolinate from L-aspartate: step 3/4. Catalyzes the condensation of (S)-aspartate-beta-semialdehyde [(S)-ASA] and pyruvate to 4-hydroxy-tetrahydrodipicolinate (HTPA). The chain is 4-hydroxy-tetrahydrodipicolinate synthase from Prochlorococcus marinus (strain MIT 9211).